Consider the following 453-residue polypeptide: Putative amino acid/polyamine transporter MPH_07630_2 (453 aa).

Transmembrane regions (helical) follow at residues 2 to 21 (IGFS…VLVV), 30 to 50 (VMIW…YSMA), and 81 to 101 (VCGW…NFIA). Asparagine 110 carries an N-linked (GlcNAc...) asparagine glycan. The next 2 helical transmembrane spans lie at 121–141 (WHAV…SIFL) and 151–171 (AILI…LATN). Asparagine 186 is a glycosylation site (N-linked (GlcNAc...) asparagine). The next 2 helical transmembrane spans lie at 193 to 213 (AYAA…YDAP) and 231 to 251 (IVMS…SLCF). N-linked (GlcNAc...) asparagine glycosylation is present at asparagine 274. Transmembrane regions (helical) follow at residues 277-297 (GSVA…LVCA), 330-350 (LGVP…FNSI), 358-378 (FNTV…IPLL), and 403-423 (GLLA…TFNF). Asparagine 435 is a glycosylation site (N-linked (GlcNAc...) asparagine).

Belongs to the amino acid-polyamine-organocation (APC) superfamily.

The protein localises to the membrane. The sequence is that of Putative amino acid/polyamine transporter MPH_07630_2 from Macrophomina phaseolina (strain MS6) (Charcoal rot fungus).